We begin with the raw amino-acid sequence, 298 residues long: 5,10-methylenetetrahydrofolate reductase (298 aa).

The Proton donor/acceptor role is filled by Glu28. An NADH-binding site is contributed by Thr59. Residues Tyr60, Ala62, His88, Arg118, Gly119, Asp120, Ala132, Tyr152, His156, Ala159, Asp165, Asn168, and Lys172 each contribute to the FAD site. Asp120 is a binding site for (6S)-5-methyl-5,6,7,8-tetrahydrofolate. Gln183 lines the NADH pocket. Residues Gln183, Gln219, and Arg279 each coordinate (6S)-5-methyl-5,6,7,8-tetrahydrofolate.

It belongs to the methylenetetrahydrofolate reductase family. The cofactor is FAD.

The catalysed reaction is (6S)-5-methyl-5,6,7,8-tetrahydrofolate + NAD(+) = (6R)-5,10-methylene-5,6,7,8-tetrahydrofolate + NADH + H(+). It functions in the pathway one-carbon metabolism; tetrahydrofolate interconversion. Its pathway is amino-acid biosynthesis; L-methionine biosynthesis via de novo pathway. Catalyzes the NADH-dependent reduction of 5,10-methylenetetrahydrofolate to 5-methyltetrahydrofolate. Is required to provide the methyl group necessary for methionine synthetase to convert homocysteine to methionine; the methyl group is given by 5-methyltetrahydrofolate. The chain is 5,10-methylenetetrahydrofolate reductase (metF) from Pectobacterium carotovorum subsp. carotovorum (Erwinia carotovora subsp. carotovora).